Reading from the N-terminus, the 146-residue chain is BCL7-like protein (146 aa).

The interval 59-146 is disordered; the sequence is MAPPKIKEVK…RDAEMTSKQP (88 aa). Composition is skewed to polar residues over residues 75 to 90 and 113 to 134; these read NQVP…TSVT and DSNQ…TDFS. Positions 135–146 are enriched in basic and acidic residues; it reads SMRDAEMTSKQP.

It belongs to the BCL7 family. In terms of tissue distribution, ubiquitous.

The protein resides in the nucleus. Required for the terminal differentiation of seam cells, and the differentiation of distal tip cells important for normal somatic gonad and germ cell development. Plays a role in the Wnt signaling pathway, regulating the expression of beta-catenin homologs wrm-1, bar-1 and sys-1, and the localization of wrm-1 and the wnt signaling pathway component pop-1 during asymmetric cell division of seam cells and the Z-cell lineage of the somatic gonad, respectively. May have a pro-apoptotic role, possibly linked to the negative regulation of expression of anti-apoptotic factor ced-9. The polypeptide is BCL7-like protein (Caenorhabditis elegans).